Here is a 361-residue protein sequence, read N- to C-terminus: Fructose-bisphosphate aldolase (361 aa).

Position 2 is an N-acetylthreonine (T2). Residues R56 and K147 each coordinate substrate. E188 (proton acceptor) is an active-site residue. Residue K230 is the Schiff-base intermediate with dihydroxyacetone-P of the active site.

The protein belongs to the class I fructose-bisphosphate aldolase family. Homotetramer. In terms of tissue distribution, mainly expressed in the heads and partly in the thoraxes of adult flies. As to expression, expressed in all adult tissues. The Alpha-beta mRNA shows strong expression in the abdomens of adults. Mainly expressed in adult abdominal regions and is also expressed in lesser amounts in other parts of the body. The Beta-gamma mRNA is expressed in adult heads.

It carries out the reaction beta-D-fructose 1,6-bisphosphate = D-glyceraldehyde 3-phosphate + dihydroxyacetone phosphate. The protein operates within carbohydrate degradation; glycolysis; D-glyceraldehyde 3-phosphate and glycerone phosphate from D-glucose: step 4/4. Functionally, enzyme of the glycolytic pathway. Glycolysis is essential in glial cells but not in neurons; neurons rely on the citric acid cycle for their energy needs, and on lactate and alanine secreted into the hemolymph by glial cells to fuel it. May take part in developmental stage-specific or tissue -specific sugar-phosphate metabolisms. Protein acts on two substrates fructose 1,6-bisphosphate and fructose 1-phosphate (like other class I aldolases). This Drosophila melanogaster (Fruit fly) protein is Fructose-bisphosphate aldolase.